The following is a 1012-amino-acid chain: Antigenic heat-stable 120 kDa protein (1012 aa).

Disordered stretches follow at residues 1-73 and 348-396; these read DTSE…TSDP and GQSK…PQSQ. Residues 12-27 show a composition bias toward basic and acidic residues; the sequence is EYTEEQKQTLEQEQKE. The segment covering 47–61 has biased composition (low complexity); it reads SASSAQSTPSMSALS. Composition is skewed to polar residues over residues 62–73, 348–373, and 380–396; these read GNISPDSQTSDP, GQSK…QYKQ, and PTNQ…PQSQ.

The protein resides in the cytoplasm. This Rickettsia slovaca protein is Antigenic heat-stable 120 kDa protein (sca4).